The following is a 1133-amino-acid chain: Eukaryotic translation initiation factor 3 subunit A (1133 aa).

The PCI domain maps to 317-498 (IQRMTSHVLI…HCVHFGTDLS (182 aa)). 2 coiled-coil regions span residues 573–700 (KKIE…YFER) and 784–886 (EEER…EADS). Residues 810 to 893 (KEEERRRAEE…ADSWRDRRGG (84 aa)) show a composition bias toward basic and acidic residues. Residues 810-1133 (KEEERRRAEE…DGWTDVKHHR (324 aa)) are disordered. The segment covering 895 to 909 (APAAAAQPNPAAQEA) has biased composition (low complexity). 3 stretches are compositionally biased toward basic and acidic residues: residues 920 to 944 (GARE…RDVR), 954 to 1081 (VERR…DSAW), and 1097 to 1117 (TRQD…KEAR).

This sequence belongs to the eIF-3 subunit A family. As to quaternary structure, component of the eukaryotic translation initiation factor 3 (eIF-3) complex.

Its subcellular location is the cytoplasm. Its function is as follows. RNA-binding component of the eukaryotic translation initiation factor 3 (eIF-3) complex, which is involved in protein synthesis of a specialized repertoire of mRNAs and, together with other initiation factors, stimulates binding of mRNA and methionyl-tRNAi to the 40S ribosome. The eIF-3 complex specifically targets and initiates translation of a subset of mRNAs involved in cell proliferation. This Aedes aegypti (Yellowfever mosquito) protein is Eukaryotic translation initiation factor 3 subunit A.